The following is a 61-amino-acid chain: uncharacterized protein (61 aa).

The protein belongs to the DUP/COS family.

This is an uncharacterized protein from Saccharomyces cerevisiae (strain ATCC 204508 / S288c) (Baker's yeast).